Reading from the N-terminus, the 600-residue chain is Probable pectin methyltransferase QUA3 (600 aa).

Residues 1–18 lie on the Cytoplasmic side of the membrane; the sequence is MGHVNLPASKRGNPRQWR. The chain crosses the membrane as a helical; Signal-anchor for type II membrane protein span at residues 19–39; the sequence is LLDIVTAAFFGIVLLFFILLF. The Lumenal portion of the chain corresponds to 40–600; sequence TPLGDSMAAS…SLWKLPSNSH (561 aa). N-linked (GlcNAc...) asparagine glycosylation occurs at asparagine 283.

This sequence belongs to the methyltransferase superfamily. Highly expressed and abundant in suspension-cultured cells, but low levels in seedlings.

It is found in the golgi apparatus membrane. It participates in glycan metabolism; pectin biosynthesis. Its function is as follows. S-adenosyl-L-methionine (SAM)-dependent methyltransferase (MTase) which mediates the methylesterification of the pectin homogalacturonan (HG) and thus regulates cell wall biosynthesis, at least in suspension-cultured cells. The chain is Probable pectin methyltransferase QUA3 from Arabidopsis thaliana (Mouse-ear cress).